The chain runs to 23 residues: Dahlein-4.2 (23 aa).

As to expression, expressed by the skin dorsal glands.

It localises to the secreted. Its function is as follows. Has no antimicrobial activity. The protein is Dahlein-4.2 of Ranoidea dahlii (Dahl's aquatic frog).